A 1371-amino-acid chain; its full sequence is Serine protease pic autotransporter (1371 aa).

Residues 1-55 (MNKVYSLKYCPVTGGLIVVSELASRVIKKTCRRLTHILLAGIPAVYLYYPQISQA) form the signal peptide. The region spanning 56-301 (GIVRSDIAYQ…NVIPTDYLNQ (246 aa)) is the Peptidase S6 domain. Residues histidine 127, aspartate 155, and serine 258 each act as charge relay system in the active site. Residues 1105-1371 (DTNGDAGAWA…AVNANFRYMF (267 aa)) form the Autotransporter domain.

Cleaved to release the mature protein from the outer membrane.

The protein localises to the periplasm. It localises to the secreted. The protein resides in the cell surface. It is found in the cell outer membrane. In terms of biological role, involved in virulence of uropathogenic E.coli although it is not known how it contributes to it. Has no mucinase activity. In Escherichia coli O6:H1 (strain CFT073 / ATCC 700928 / UPEC), this protein is Serine protease pic autotransporter (pic).